Reading from the N-terminus, the 737-residue chain is Delta and Notch-like epidermal growth factor-related receptor (737 aa).

An N-terminal signal peptide occupies residues 1-25 (MPPRRAQAPGAPLLPVLALLPLLLG). The Extracellular segment spans residues 26-640 (AGPQSGCLAS…LTNMPRHSLY (615 aa)). EGF-like domains follow at residues 44-92 (APGP…TYCQ) and 94-133 (VADPCASNPCHHGNCSSSSSSSSDSYLCICNDGYEGLNCE). Positions 44 to 133 (APGPCASQPC…NDGYEGLNCE (90 aa)) are interaction with NOTCH1. Disulfide bonds link C48-C59, C53-C80, C82-C91, C98-C108, C103-C121, and C123-C132. N-linked (GlcNAc...) asparagine glycosylation is present at N204. EGF-like domains follow at residues 309–348 (PGDSHSNDLECSGKGKCATKPSEATFSCTCQDQYIGTFCE), 349–390 (EFDA…ELCQ), 392–428 (KIDYCVLDPCRNGATCVSSLSGFTCQCLEGYFGSACE), 430–466 (KVDPCMSSPCQNNGTCYVDGVHFTCSCSPGFTGPTCA), and 468–503 (LVDFCALSPCAHGMCRSVGTSYKCLCDPGYHGLYCE). Intrachain disulfides connect C319-C336, C338-C347, C353-C364, C358-C378, C380-C389, C396-C407, C401-C416, C418-C427, C434-C445, C439-C454, C456-C465, C472-C482, C477-C491, C493-C502, C509-C520, C514-C529, C531-C540, C547-C558, C552-C567, C569-C578, C585-C596, C590-C605, and C607-C616. The EGF-like 8; calcium-binding domain maps to 505-541 (EYNECLSAPCLNAATCRDLINGYECVCLAEYKGTHCE). The EGF-like 9 domain maps to 543–579 (YKDPCANISCLNGGTCDSEGLNGTCICAPGFTGEECD). N564 carries N-linked (GlcNAc...) asparagine glycosylation. The 37-residue stretch at 581–617 (DINECDSNPCHHAGTCLDQPNGYTCHCPHGWVGANCE) folds into the EGF-like 10; calcium-binding domain. The chain crosses the membrane as a helical span at residues 641-661 (IIIGALCVAFILMLIILIVGI). Topologically, residues 662–737 (CRISRIEYQG…LVTLIKTKDL (76 aa)) are cytoplasmic. The interaction with AP1G1 and somatodendritic targeting stretch occupies residues 677–680 (YEEF). S685 is modified (phosphoserine). A Phosphotyrosine modification is found at Y711. T714 carries the phosphothreonine modification. Position 721 is a phosphotyrosine (Y721). The residue at position 722 (S722) is a Phosphoserine.

As to quaternary structure, interacts with AP1G1. Interacts with NOTCH1. Post-translationally, N-glycosylated. As to expression, specifically expressed in brain neurons (at protein level).

It localises to the cell membrane. Functionally, mediates neuron-glia interaction during astrocytogenesis. May promote differentiation of Bergmann glia during cerebellar development by activating DELTEX-dependent NOTCH1 signaling. The polypeptide is Delta and Notch-like epidermal growth factor-related receptor (Dner) (Mus musculus (Mouse)).